A 137-amino-acid polypeptide reads, in one-letter code: Cellular retinoic acid-binding protein 1 (137 aa).

Positions 21 to 31 (KALGVNAMLRK) match the Nuclear localization signal motif. 132–134 (RIY) is a binding site for all-trans-retinoate.

The protein belongs to the calycin superfamily. Fatty-acid binding protein (FABP) family.

The protein localises to the cytoplasm. Its function is as follows. Cytosolic CRABPs may regulate the access of retinoic acid to the nuclear retinoic acid receptors. This chain is Cellular retinoic acid-binding protein 1 (crabp1), found in Hippocampus comes (Tiger tail seahorse).